We begin with the raw amino-acid sequence, 291 residues long: Small ribosomal subunit protein uS2 (291 aa).

The disordered stretch occupies residues 255–291 (AGAATGEWSEAQGAQWETGTGAPAADWAAEPAKESSW).

Belongs to the universal ribosomal protein uS2 family. As to quaternary structure, component of the small ribosomal subunit. Mature ribosomes consist of a small (40S) and a large (60S) subunit. The 40S subunit contains about 33 different proteins and 1 molecule of RNA (18S). The 60S subunit contains about 49 different proteins and 3 molecules of RNA (25S, 5.8S and 5S). Interacts with RPS21.

Its subcellular location is the cytoplasm. In terms of biological role, required for the assembly and/or stability of the 40S ribosomal subunit. Required for the processing of the 20S rRNA-precursor to mature 18S rRNA in a late step of the maturation of 40S ribosomal subunits. In Podospora anserina (strain S / ATCC MYA-4624 / DSM 980 / FGSC 10383) (Pleurage anserina), this protein is Small ribosomal subunit protein uS2.